Consider the following 356-residue polypeptide: S-adenosylmethionine:tRNA ribosyltransferase-isomerase (356 aa).

Belongs to the QueA family. Monomer.

Its subcellular location is the cytoplasm. The catalysed reaction is 7-aminomethyl-7-carbaguanosine(34) in tRNA + S-adenosyl-L-methionine = epoxyqueuosine(34) in tRNA + adenine + L-methionine + 2 H(+). It functions in the pathway tRNA modification; tRNA-queuosine biosynthesis. Transfers and isomerizes the ribose moiety from AdoMet to the 7-aminomethyl group of 7-deazaguanine (preQ1-tRNA) to give epoxyqueuosine (oQ-tRNA). In Shigella dysenteriae serotype 1 (strain Sd197), this protein is S-adenosylmethionine:tRNA ribosyltransferase-isomerase.